Consider the following 418-residue polypeptide: rRNA methyltransferase 3, mitochondrial (418 aa).

Residues 1 to 40 (MAAPAKGMWCSLGSLLRVVQTRDLNARRWVRALRRSPVRV) constitute a mitochondrion transit peptide. Positions 41–90 (LSPSGQVEERKRAPDQQPRKAVPKASSQGQRQKQPLETSPSQTPHTWEEA) are disordered. The segment covering 47 to 58 (VEERKRAPDQQP) has biased composition (basic and acidic residues). Residues 65–85 (ASSQGQRQKQPLETSPSQTPH) are compositionally biased toward polar residues. S-adenosyl-L-methionine is bound by residues Gly-354, Ile-378, and Leu-387.

Belongs to the class IV-like SAM-binding methyltransferase superfamily. RNA methyltransferase TrmH family.

The protein localises to the mitochondrion. The catalysed reaction is guanosine(1370) in 16S rRNA + S-adenosyl-L-methionine = 2'-O-methylguanosine(1370) in 16S rRNA + S-adenosyl-L-homocysteine + H(+). In terms of biological role, S-adenosyl-L-methionine-dependent 2'-O-ribose methyltransferase that catalyzes the formation of 2'-O-methylguanosine at position 1370 (Gm1370) in the 16S mitochondrial large subunit ribosomal RNA (mtLSU rRNA), a conserved modification in the peptidyl transferase domain of the mtLSU rRNA. Also required for formation of 2'-O-methyluridine at position 1369 (Um1369) mediated by MRM2. In Mus musculus (Mouse), this protein is rRNA methyltransferase 3, mitochondrial.